A 139-amino-acid chain; its full sequence is Small ribosomal subunit protein bS16 (139 aa).

The tract at residues 84-139 is disordered; it reads KGEPAPAPLLQPAEKAARPSFEAIGGEDEGKGEAITQKKKADKKDEAAAESSASEA.

The protein belongs to the bacterial ribosomal protein bS16 family.

The protein is Small ribosomal subunit protein bS16 of Streptomyces coelicolor (strain ATCC BAA-471 / A3(2) / M145).